The following is a 294-amino-acid chain: Putative ribose uptake protein RbsU (294 aa).

10 consecutive transmembrane segments (helical) span residues 2–24 (NAVNILIGLMPMIGWGIFPVIVG), 34–56 (ILGTTFGTLILAIVVAIFRGTPI), 63–82 (IFCLISGACWALAQIITFHV), 92–114 (MPITTGFQLVGASLWGVFVLGNW), 121–140 (LIGFTAIALIIIGVYLTAWS), 150–172 (GAVKGILLLLVGELGYLGYSAFP), 179–198 (GFQGFLPQAIGMTIVGIIFG), 218–235 (IFSGFFFAFAALTYLISA), 242–264 (LATGFVLSQTSVIFATIGGIYIL), and 274–293 (IAVMVGLLLVLVAGSVTAFI).

It belongs to the GRP transporter (TC 2.A.7.5) family.

Its subcellular location is the cell membrane. Its function is as follows. Could be involved in the uptake of ribose. This is Putative ribose uptake protein RbsU (rbsU) from Latilactobacillus sakei subsp. sakei (strain 23K) (Lactobacillus sakei subsp. sakei).